Here is a 349-residue protein sequence, read N- to C-terminus: MNTFDINTITRENVKSLKPYSSARDEFEDFDTAEMIFLDANENPFQNGVNRYPDPQQNSVKAILAKNNNTKQSQILLGNGSDEVLDLLFRAFCEPNKDNIISLPPTYGMYGVLANINAVENREILLTTDFQPQVEKILEAVDENTKIIFLCSPNNPTGNSFSDESVVKLLQNFKGLVVIDEAYIDFSEKESWLTEIDEYPNLVITQTLSKAYGLAGIRLGICYASEAVISVLNKIKPPYNVNELTQQRAKERLKDLDKIKQEIASIIEQREELLKVLLEVNFVEKVYPTEANFILAKVDDANKRYNQLIEKGIVIRNRTTQPLCENCLRFTIGTKEENAVVIKELKLLN.

Lys-210 carries the post-translational modification N6-(pyridoxal phosphate)lysine.

Belongs to the class-II pyridoxal-phosphate-dependent aminotransferase family. Histidinol-phosphate aminotransferase subfamily. As to quaternary structure, homodimer. Pyridoxal 5'-phosphate is required as a cofactor.

It catalyses the reaction L-histidinol phosphate + 2-oxoglutarate = 3-(imidazol-4-yl)-2-oxopropyl phosphate + L-glutamate. Its pathway is amino-acid biosynthesis; L-histidine biosynthesis; L-histidine from 5-phospho-alpha-D-ribose 1-diphosphate: step 7/9. The sequence is that of Histidinol-phosphate aminotransferase from Flavobacterium johnsoniae (strain ATCC 17061 / DSM 2064 / JCM 8514 / BCRC 14874 / CCUG 350202 / NBRC 14942 / NCIMB 11054 / UW101) (Cytophaga johnsonae).